Here is a 102-residue protein sequence, read N- to C-terminus: ATP-dependent Clp protease adapter protein ClpS (102 aa).

It belongs to the ClpS family. In terms of assembly, binds to the N-terminal domain of the chaperone ClpA.

Its function is as follows. Involved in the modulation of the specificity of the ClpAP-mediated ATP-dependent protein degradation. This Desulfotalea psychrophila (strain LSv54 / DSM 12343) protein is ATP-dependent Clp protease adapter protein ClpS.